Here is a 681-residue protein sequence, read N- to C-terminus: Probable L-type lectin-domain containing receptor kinase VII.2 (681 aa).

Residues 1–23 form the signal peptide; it reads MFSKVSILLFSLASLLLFRSTTG. The segment at 24-260 is legume-lectin like; the sequence is IEFIYNSNFT…SHRILSWSFS (237 aa). Residues 24-290 are Extracellular-facing; that stretch reads IEFIYNSNFT…SGDSVLKSKG (267 aa). N-linked (GlcNAc...) asparagine glycosylation is found at N31, N42, N56, N72, N126, N202, N207, N228, and N263. A helical membrane pass occupies residues 291–311; it reads FIAGVSSGVVLLVSVIGLLCF. Residues 312–681 are Cytoplasmic-facing; sequence YVVRRRRQRL…QTYDSILHGR (370 aa). One can recognise a Protein kinase domain in the interval 349–624; sequence FSDENMIGYG…VVQILEQGRL (276 aa). ATP is bound by residues 355–363 and K376; that span reads IGYGGNSKV. The Proton acceptor role is filled by D475.

This sequence in the C-terminal section; belongs to the protein kinase superfamily. Ser/Thr protein kinase family. It in the N-terminal section; belongs to the leguminous lectin family.

The protein resides in the cell membrane. It carries out the reaction L-seryl-[protein] + ATP = O-phospho-L-seryl-[protein] + ADP + H(+). It catalyses the reaction L-threonyl-[protein] + ATP = O-phospho-L-threonyl-[protein] + ADP + H(+). This Arabidopsis thaliana (Mouse-ear cress) protein is Probable L-type lectin-domain containing receptor kinase VII.2 (LECRK72).